The sequence spans 97 residues: Small ribosomal subunit protein bS6 (97 aa).

It belongs to the bacterial ribosomal protein bS6 family.

Functionally, binds together with bS18 to 16S ribosomal RNA. This Bifidobacterium longum (strain NCC 2705) protein is Small ribosomal subunit protein bS6.